The sequence spans 309 residues: Cytochrome c biogenesis protein CcsA (309 aa).

8 consecutive transmembrane segments (helical) span residues 18-38, 43-63, 73-93, 102-122, 148-168, 216-236, 250-267, and 279-299; these read LGLL…GAVF, SFAV…QLLF, ISNL…GQLL, IIPS…CFVL, VMLS…VLFI, SILI…VWAN, TWAF…HMRI, and LAST…FLGI.

The protein belongs to the CcmF/CycK/Ccl1/NrfE/CcsA family. May interact with ccs1.

The protein localises to the cellular thylakoid membrane. In terms of biological role, required during biogenesis of c-type cytochromes (cytochrome c6 and cytochrome f) at the step of heme attachment. The sequence is that of Cytochrome c biogenesis protein CcsA from Prochlorococcus marinus (strain MIT 9301).